The following is a 228-amino-acid chain: Urease accessory protein UreH (228 aa).

Transmembrane regions (helical) follow at residues 48–68, 79–99, 130–150, 162–182, and 196–216; these read VFWG…IILM, SLEF…ILSL, LFIG…LTMS, ILFF…LIGI, and AFIQ…MYNL.

Belongs to the NiCoT transporter (TC 2.A.52) family.

The protein localises to the cell membrane. Functionally, probably facilitates nickel incorporation. May constitute a multicomponent high-affinity nickel transporter. Not essential for the expression of catalytically active urease. The protein is Urease accessory protein UreH (ureH) of Bacillus sp. (strain TB-90).